A 421-amino-acid chain; its full sequence is Diaminopimelate decarboxylase (421 aa).

K62 is modified (N6-(pyridoxal phosphate)lysine). Pyridoxal 5'-phosphate contacts are provided by residues G237 and 279–282 (EPGR). Substrate-binding residues include R282, R319, and Y323. Catalysis depends on C349, which acts as the Proton donor. Residues E350 and Y379 each coordinate substrate. Y379 is a pyridoxal 5'-phosphate binding site.

It belongs to the Orn/Lys/Arg decarboxylase class-II family. LysA subfamily. As to quaternary structure, homodimer. Requires pyridoxal 5'-phosphate as cofactor.

It carries out the reaction meso-2,6-diaminopimelate + H(+) = L-lysine + CO2. Its pathway is amino-acid biosynthesis; L-lysine biosynthesis via DAP pathway; L-lysine from DL-2,6-diaminopimelate: step 1/1. Specifically catalyzes the decarboxylation of meso-diaminopimelate (meso-DAP) to L-lysine. Plays a role in beta-lactam antibiotic resistance. The sequence is that of Diaminopimelate decarboxylase (lysA) from Staphylococcus aureus (strain COL).